The sequence spans 394 residues: Putative transporter AraJ (394 aa).

The Cytoplasmic portion of the chain corresponds to 1–4; the sequence is MKKV. A helical membrane pass occupies residues 5–27; it reads ILSLALGTFGLGMAEFGIMGVLT. Over 28 to 41 the chain is Periplasmic; the sequence is ELAHNVGISIPAAG. The helical transmembrane segment at 42–63 threads the bilayer; the sequence is HMISYYALGVVVGAPIIALFSS. At 64–69 the chain is on the cytoplasmic side; sequence RYSLKH. A helical membrane pass occupies residues 70–89; it reads ILLFLVALCVIGNAMFTLSS. Over 90–93 the chain is Periplasmic; the sequence is SYLM. Residues 94–116 form a helical membrane-spanning segment; that stretch reads LAIGRLVSGFPHGAFFGVGAIVL. Over 117–128 the chain is Cytoplasmic; it reads SKIIKPGKVTAA. Residues 129–151 traverse the membrane as a helical segment; sequence VAGMVSGMTVANLLGIPLGTYLS. The Periplasmic segment spans residues 152 to 155; that stretch reads QEFS. The helical transmembrane segment at 156-178 threads the bilayer; it reads WRYTFLLIAVFNIAVMASVYFWV. Residues 179–198 are Cytoplasmic-facing; the sequence is PDIRDEAKGNLREQFHFLRS. The helical transmembrane segment at 199–221 threads the bilayer; it reads PAPWLIFAATMFGNAGVFAWFSY. Over 222–235 the chain is Periplasmic; that stretch reads VKPYMMFISGFSET. Residues 236 to 255 traverse the membrane as a helical segment; sequence AMTFIMMLVGLGMVLGNMLS. At 256 to 261 the chain is on the cytoplasmic side; sequence GRISGR. A helical transmembrane segment spans residues 262 to 284; that stretch reads YSPLRIAAVTDFIIVLALLMLFF. At 285 to 293 the chain is on the periplasmic side; it reads CGGMKTTSL. Residues 294–316 traverse the membrane as a helical segment; sequence IFAFICCAGLFALSAPLQILLLQ. Over 317–322 the chain is Cytoplasmic; sequence NAKGGE. The helical transmembrane segment at 323-342 threads the bilayer; it reads LLGAAGGQIAFNLGSAVGAY. Over 343 to 351 the chain is Periplasmic; it reads CGGMMLTLG. A helical membrane pass occupies residues 352–374; sequence LAYNYVALPAALLSFAAMSSLLL. Residues 375–394 are Cytoplasmic-facing; it reads YGRYKRQQAADTPVLAKPLG.

This sequence belongs to the major facilitator superfamily.

It localises to the cell inner membrane. Its function is as follows. May be involved in either the transport or processing of arabinose polymers. This chain is Putative transporter AraJ (araJ), found in Escherichia coli (strain K12).